We begin with the raw amino-acid sequence, 250 residues long: Ribonucleotide monophosphatase NagD (250 aa).

Mg(2+) contacts are provided by aspartate 9 and aspartate 11. Residue aspartate 11 is part of the active site. Substrate is bound by residues aspartate 11, 42–43, and lysine 176; that span reads TN. Aspartate 201 is a binding site for Mg(2+). Residue 202–205 participates in substrate binding; it reads NLRT.

This sequence belongs to the HAD-like hydrolase superfamily. NagD family. In terms of assembly, monomer. The cofactor is Mg(2+). It depends on Mn(2+) as a cofactor. Co(2+) is required as a cofactor. Zn(2+) serves as cofactor.

It catalyses the reaction a ribonucleoside 5'-phosphate + H2O = a ribonucleoside + phosphate. Its function is as follows. Catalyzes the dephosphorylation of an unusually broad range of substrate including deoxyribo- and ribonucleoside tri-, di-, and monophosphates, as well as polyphosphate and glucose-1-P (Glu1P). This Escherichia coli O157:H7 protein is Ribonucleotide monophosphatase NagD (nagD).